The primary structure comprises 121 residues: Ribonuclease P protein component (121 aa).

It belongs to the RnpA family. In terms of assembly, consists of a catalytic RNA component (M1 or rnpB) and a protein subunit.

It catalyses the reaction Endonucleolytic cleavage of RNA, removing 5'-extranucleotides from tRNA precursor.. Its function is as follows. RNaseP catalyzes the removal of the 5'-leader sequence from pre-tRNA to produce the mature 5'-terminus. It can also cleave other RNA substrates such as 4.5S RNA. The protein component plays an auxiliary but essential role in vivo by binding to the 5'-leader sequence and broadening the substrate specificity of the ribozyme. The sequence is that of Ribonuclease P protein component from Chromobacterium violaceum (strain ATCC 12472 / DSM 30191 / JCM 1249 / CCUG 213 / NBRC 12614 / NCIMB 9131 / NCTC 9757 / MK).